The sequence spans 416 residues: Enterobactin exporter EntS (416 aa).

At 1-21 the chain is on the cytoplasmic side; the sequence is MNKQSWLLNLSLLKTHPAFRA. A helical transmembrane segment spans residues 22 to 42; that stretch reads VFLARFISIVSLGLLGVAVPV. Residues 43–55 are Periplasmic-facing; the sequence is QIQMMTHSTWQVG. Residues 56-76 form a helical membrane-spanning segment; sequence LSVTLTGGAMFVGLMVGGVLA. The Cytoplasmic segment spans residues 77-83; that stretch reads DRYERKK. The chain crosses the membrane as a helical span at residues 84–104; it reads VILLARGTCGIGFIGLCLNAL. Residues 105 to 109 lie on the Periplasmic side of the membrane; the sequence is LPEPS. The helical transmembrane segment at 110–130 threads the bilayer; it reads LLAIYLLGLWDGFFASLGVTA. Over 131–156 the chain is Cytoplasmic; the sequence is LLAATPALVGRENLMQAGAITMLTVR. Residues 157 to 177 form a helical membrane-spanning segment; sequence LGSVISPMIGGLLLATGGVAW. Residue N178 is a topological domain, periplasmic. The chain crosses the membrane as a helical span at residues 179–199; it reads YGLAAAGTFITLLPLLSLPAL. Topologically, residues 200–218 are cytoplasmic; that stretch reads PPPPQPREHPLKSLLAGFR. The chain crosses the membrane as a helical span at residues 219–239; sequence FLLASPLVGGIALLGGLLTMA. Topologically, residues 240 to 256 are periplasmic; the sequence is SAVRVLYPALADNWQMS. A helical membrane pass occupies residues 257–277; the sequence is AAQIGFLYAAIPLGAAIGALT. Over 278–287 the chain is Cytoplasmic; it reads SGKLAHSARP. The chain crosses the membrane as a helical span at residues 288 to 307; it reads GLLMLLSTLGSFLAIGLFGL. Residues 308–313 lie on the Periplasmic side of the membrane; that stretch reads MPMWIL. A helical membrane pass occupies residues 314-336; that stretch reads GVVCLALFGWLSAVSSLLQYTML. The Cytoplasmic portion of the chain corresponds to 337–356; sequence QTQTPEAMLGRINGLWTAQN. The helical transmembrane segment at 357–377 threads the bilayer; sequence VTGDAIGAALLGGLGAMMTPV. Residue A378 is a topological domain, periplasmic. Residues 379-399 form a helical membrane-spanning segment; the sequence is SASASGFGLLIIGVLLLLVLV. The Cytoplasmic portion of the chain corresponds to 400-416; the sequence is ELRRFRQTPPQVTASDG.

The protein belongs to the major facilitator superfamily. EntS (TC 2.A.1.38) family.

The protein resides in the cell inner membrane. Functionally, component of an export pathway for enterobactin. This chain is Enterobactin exporter EntS, found in Escherichia coli O157:H7.